We begin with the raw amino-acid sequence, 964 residues long: Chromatin assembly factor 1 subunit A (964 aa).

The tract at residues 1–49 is binds to PCNA; the sequence is MLEEPECGAPGARGEAAAMDCKDRPAFPVKKLIQARLPFKRLNLVPKEK. Positions 1–316 are binds to CBX1 chromo shadow domain; that stretch reads MLEEPECGAP…LHTGPSPFPA (316 aa). 3 positions are modified to phosphoserine: serine 126, serine 141, and serine 144. The disordered stretch occupies residues 146–232; it reads AQKNINGVPD…KDRDGWSEAG (87 aa). A compositionally biased stretch (basic and acidic residues) spans 156 to 172; the sequence is KAGDDRGLPKARQKDEL. Residue lysine 185 forms a Glycyl lysine isopeptide (Lys-Gly) (interchain with G-Cter in SUMO1); alternate linkage. Lysine 185 participates in a covalent cross-link: Glycyl lysine isopeptide (Lys-Gly) (interchain with G-Cter in SUMO2); alternate. Positions 236-249 match the PxVxL motif motif; the sequence is FKGKMPVVVLQDIL. 2 disordered regions span residues 253-437 and 601-641; these read PPAR…REEE and DSDE…VPHG. Residues 284 to 298 show a composition bias toward low complexity; that stretch reads LSHSSLSSSSPTSSP. Serine 312 bears the Phosphoserine mark. Residues 329-453 adopt a coiled-coil conformation; sequence RGSAEKNKMK…KAEITRFFQK (125 aa). Residues 331 to 437 are compositionally biased toward basic and acidic residues; it reads SAEKNKMKLQ…EEEKRLREEE (107 aa). Acidic residues-rich tracts occupy residues 601-612 and 620-635; these read DSDEEWEEEEPG and GDDD…EDDG. The tract at residues 644–680 is necessary for homodimerization and competence for chromatin assembly; the sequence is SEDEGVTEECADPENHKVRQKLKAKEWDEFLAKGKRF. The tract at residues 662-964 is binds to p60; sequence RQKLKAKEWD…FVSPSSLRLS (303 aa). Threonine 723 is modified (phosphothreonine). The disordered stretch occupies residues 769–799; the sequence is RDAGSPEDSAASPPSPGPARPQTPTASEDVA. A compositionally biased stretch (low complexity) spans 770–780; that stretch reads DAGSPEDSAAS. 5 positions are modified to phosphoserine: serine 773, serine 783, serine 811, serine 876, and serine 881. Residues 859 to 878 form a disordered region; that stretch reads EDSGSVPAPGPGQGMPVSLK. Disordered stretches follow at residues 897-920 and 933-964; these read DGQV…DDEG and IQAP…LRLS. Residues 904-920 are compositionally biased toward acidic residues; that stretch reads DLDDFQADTEEEDDDEG. Polar residues predominate over residues 949-964; sequence MDTSESFVSPSSLRLS. Serine 959 is modified (phosphoserine).

The protein belongs to the CHAF1A family. Homodimer. Part of the CAF-1 complex that contains RBBP4, CHAF1B and CHAF1A. CHAF1A binds directly to CHAF1B. Only minor amounts of RBBP4 are complexed with CHAF1A and CHAF1B in G1 phase. Interacts with PCNA; the interaction is direct. Interacts (via the PxVxL motif) with CBX5; the interaction is direct. Interacts with MBD1. Interacts with histones H3.1, H3.2 and H3.1t.

The protein resides in the nucleus. Its function is as follows. Acts as a component of the histone chaperone complex chromatin assembly factor 1 (CAF-1), which assembles histone octamers onto DNA during replication and repair. CAF-1 performs the first step of the nucleosome assembly process, bringing newly synthesized histones H3 and H4 to replicating DNA; histones H2A/H2B can bind to this chromatin precursor subsequent to DNA replication to complete the histone octamer. It may play a role in heterochromatin maintenance in proliferating cells by bringing newly synthesized cbx proteins to heterochromatic DNA replication foci. This Bos taurus (Bovine) protein is Chromatin assembly factor 1 subunit A (CHAF1A).